A 770-amino-acid polypeptide reads, in one-letter code: Protein PAT1 homolog 1 (770 aa).

Residues 1–42 are disordered; that stretch reads MFRYESLEDCPLDEDEDAFQGLGEEDEEIDQFNDDTFGSGAV. The region A; interaction with DDX6/RCK stretch occupies residues 1-84; it reads MFRYESLEDC…EMDLLGDHEE (84 aa). Residues 1–397 are involved in nuclear foci localization; that stretch reads MFRYESLEDC…HQSSHQDHLR (397 aa). The span at 7–33 shows a compositional bias: acidic residues; it reads LEDCPLDEDEDAFQGLGEEDEEIDQFN. Residues 85–388 form a region N; interaction with decapping machinery region; that stretch reads NLAERLSKMV…LNGTGDRGGH (304 aa). A Nuclear export signal motif is present at residues 86-95; it reads LAERLSKMVI. The tract at residues 155-195 is disordered; it reads PQRPLQGPEDDRDLSERALPRRSTSPIIGSPPVRAVPIGTP. Residue Ser-177 is modified to Phosphoserine. Thr-178 carries the phosphothreonine modification. 2 positions are modified to phosphoserine: Ser-179 and Ser-184. Residue Thr-194 is modified to Phosphothreonine. 3 positions are modified to asymmetric dimethylarginine: Arg-217, Arg-223, and Arg-263. Positions 223 to 397 are involved in RNA-binding; the sequence is RYPAPYGERI…HQSSHQDHLR (175 aa). Ser-278 bears the Phosphoserine mark. The residue at position 284 (Arg-284) is an Asymmetric dimethylarginine. 2 disordered regions span residues 319 to 340 and 376 to 396; these read FSAP…GPHL and HRNL…QDHL. The span at 321–337 shows a compositional bias: pro residues; sequence APPPATPPPQQHPPGPG. Residue Arg-385 is modified to Omega-N-methylarginine. Residues 385 to 396 are compositionally biased toward basic and acidic residues; the sequence is RGGHQSSHQDHL. The region H stretch occupies residues 389-448; the sequence is QSSHQDHLRKDPYANLMLQREKDWVSKIQMMQLQSTDPYLDDFYYQNYFEKLEKLSAAEE. The interval 398–770 is involved in nuclear speckle localization; it reads KDPYANLMLQ…TKLQLVQGIR (373 aa). The interval 449–770 is region C; it reads IQGDGPKKER…TKLQLVQGIR (322 aa).

Belongs to the PAT1 family. As to quaternary structure, interacts (via region A) with DDX6/RCK. Interacts (via region H and region C) with LSM1 and LSM4. Interacts (via region N) with DCP1A, DCP2, EDC3, EDC4 and XRN1. Interacts with the CCR4-NOT complex. Interacts with the Lsm-containing SMN-Sm protein complex. Interacts with EIF4ENIF1/4E-T.

The protein localises to the cytoplasm. It localises to the P-body. Its subcellular location is the nucleus. It is found in the PML body. The protein resides in the nucleus speckle. Its function is as follows. RNA-binding protein involved in deadenylation-dependent decapping of mRNAs, leading to the degradation of mRNAs. Acts as a scaffold protein that connects deadenylation and decapping machinery. Required for cytoplasmic mRNA processing body (P-body) assembly. This Mus musculus (Mouse) protein is Protein PAT1 homolog 1 (Patl1).